The sequence spans 83 residues: UPF0147 protein TK2131 (83 aa).

This sequence belongs to the UPF0147 family.

This Thermococcus kodakarensis (strain ATCC BAA-918 / JCM 12380 / KOD1) (Pyrococcus kodakaraensis (strain KOD1)) protein is UPF0147 protein TK2131.